The primary structure comprises 118 residues: Small ribosomal subunit protein uS13 (118 aa).

Positions 94–118 (SLPLRGQRTKTNARTRKGPRKPIKR) are disordered.

The protein belongs to the universal ribosomal protein uS13 family. Part of the 30S ribosomal subunit. Forms a loose heterodimer with protein S19. Forms two bridges to the 50S subunit in the 70S ribosome.

Located at the top of the head of the 30S subunit, it contacts several helices of the 16S rRNA. In the 70S ribosome it contacts the 23S rRNA (bridge B1a) and protein L5 of the 50S subunit (bridge B1b), connecting the 2 subunits; these bridges are implicated in subunit movement. Contacts the tRNAs in the A and P-sites. The chain is Small ribosomal subunit protein uS13 from Photobacterium profundum (strain SS9).